The following is a 349-amino-acid chain: tRNA uridine(34) hydroxylase (349 aa).

In terms of domain architecture, Rhodanese spans 146 to 240; the sequence is DDPDAVFIDM…YARRAREQGL (95 aa). Cys200 serves as the catalytic Cysteine persulfide intermediate. A compositionally biased stretch (basic and acidic residues) spans 316 to 328; that stretch reads EEQRRRRAGRENG. Residues 316-349 are disordered; the sequence is EEQRRRRAGRENGNKIFNKSRGRLNTKLGIPDPE.

Belongs to the TrhO family.

The enzyme catalyses uridine(34) in tRNA + AH2 + O2 = 5-hydroxyuridine(34) in tRNA + A + H2O. Functionally, catalyzes oxygen-dependent 5-hydroxyuridine (ho5U) modification at position 34 in tRNAs. This is tRNA uridine(34) hydroxylase from Enterobacter sp. (strain 638).